A 95-amino-acid polypeptide reads, in one-letter code: Protein GOLVEN 9 (95 aa).

Positions 1–24 are cleaved as a signal peptide; it reads MKKTSLKLMTLVLGFCFVIYLLQG. A propeptide spanning residues 25–73 is cleaved from the precursor; the sequence is PRGGSRNGDLLIARKLISLEPIETKNAARSLKDSISTDLEEEVDRLMEH. A disordered region spans residues 72–95; it reads EHEYPSPVKPRKRTPVHNGVRNRH. Tyr-75 is modified (sulfotyrosine). Basic residues predominate over residues 80–95; the sequence is KPRKRTPVHNGVRNRH. A Hydroxyproline modification is found at Pro-86. The propeptide occupies 90–95; it reads GVRNRH.

It belongs to the RGF family. In terms of assembly, binds to LRR receptor-like serine/threonine-protein kinases to trigger their dimerization with SERK proteins and subsequent signaling. In terms of tissue distribution, expressed in roots.

Its subcellular location is the secreted. In terms of biological role, signaling peptide (root growth factor) required during root gravitropism in a PIN2-traffic dependent manner. Regulates the pattern of root growth and lateral root development by modulating the length and the number of cortical cells in the root apical meristem (RAM), and the anticlinal asymmetric cell divisions in lateral root initiation cells. The protein is Protein GOLVEN 9 of Arabidopsis thaliana (Mouse-ear cress).